Reading from the N-terminus, the 175-residue chain is ATP synthase subunit b, chloroplastic (175 aa).

The helical transmembrane segment at valine 26–valine 44 threads the bilayer.

This sequence belongs to the ATPase B chain family. In terms of assembly, F-type ATPases have 2 components, F(1) - the catalytic core - and F(0) - the membrane proton channel. F(1) has five subunits: alpha(3), beta(3), gamma(1), delta(1), epsilon(1). F(0) has four main subunits: a(1), b(1), b'(1) and c(10-14). The alpha and beta chains form an alternating ring which encloses part of the gamma chain. F(1) is attached to F(0) by a central stalk formed by the gamma and epsilon chains, while a peripheral stalk is formed by the delta, b and b' chains.

The protein localises to the plastid. Its subcellular location is the chloroplast thylakoid membrane. In terms of biological role, f(1)F(0) ATP synthase produces ATP from ADP in the presence of a proton or sodium gradient. F-type ATPases consist of two structural domains, F(1) containing the extramembraneous catalytic core and F(0) containing the membrane proton channel, linked together by a central stalk and a peripheral stalk. During catalysis, ATP synthesis in the catalytic domain of F(1) is coupled via a rotary mechanism of the central stalk subunits to proton translocation. Functionally, component of the F(0) channel, it forms part of the peripheral stalk, linking F(1) to F(0). This chain is ATP synthase subunit b, chloroplastic, found in Tupiella akineta (Green alga).